We begin with the raw amino-acid sequence, 263 residues long: Hydroxyethylthiazole kinase 1 (263 aa).

M42 contributes to the substrate binding site. Positions 118 and 164 each coordinate ATP. G191 provides a ligand contact to substrate.

Belongs to the Thz kinase family. Requires Mg(2+) as cofactor.

The enzyme catalyses 5-(2-hydroxyethyl)-4-methylthiazole + ATP = 4-methyl-5-(2-phosphooxyethyl)-thiazole + ADP + H(+). Its pathway is cofactor biosynthesis; thiamine diphosphate biosynthesis; 4-methyl-5-(2-phosphoethyl)-thiazole from 5-(2-hydroxyethyl)-4-methylthiazole: step 1/1. Functionally, catalyzes the phosphorylation of the hydroxyl group of 4-methyl-5-beta-hydroxyethylthiazole (THZ). The chain is Hydroxyethylthiazole kinase 1 from Clostridium botulinum (strain Langeland / NCTC 10281 / Type F).